Reading from the N-terminus, the 432-residue chain is DEAD-box ATP-dependent RNA helicase 56 (432 aa).

Residues 1 to 28 (MAEAEVKDNEVYEEDLVDYEEEVENGTD) are a coiled coil. Positions 51–79 (SGFRDFLLKPELLRAIQDCGFEHPSEVQH) match the Q motif motif. One can recognise a Helicase ATP-binding domain in the interval 82 to 255 (IPQAILGMDV…KKFMQDPMEI (174 aa)). 95 to 102 (AKSGMGKT) contacts ATP. A DEAD box motif is present at residues 202 to 205 (DECD). The Helicase C-terminal domain occupies 283–428 (KLNDLLDALD…ELPEQIDTST (146 aa)).

Belongs to the DEAD box helicase family. DECD subfamily. Homodimer and heterodimer with AIP2. Interacts with API5.

It is found in the nucleus. It catalyses the reaction ATP + H2O = ADP + phosphate + H(+). Functionally, ATP-binding RNA helicase involved in pre-mRNA splicing. Required for the export of mRNA out of the nucleus. Required for tapetal programmed cell death (PCD) and degeneration during anther development. Forms dimer with AIP2 and binds the promoter region of the cysteine protease CP1. Can complement the yeast RNA helicase SUB2. Plants silencing AIP1 and AIP2 are male sterile. The chain is DEAD-box ATP-dependent RNA helicase 56 from Oryza sativa subsp. japonica (Rice).